The sequence spans 315 residues: Secreted mono- and diacylglycerol lipase LIP2 (315 aa).

The signal sequence occupies residues Met1–Ala21. A disulfide bridge connects residues Cys68 and Cys308. N-linked (GlcNAc...) asparagine glycosylation is present at Asn74. Ser182 serves as the catalytic Nucleophile. The active site involves Asp240. Asn265 carries an N-linked (GlcNAc...) asparagine glycan. His292 is a catalytic residue.

It belongs to the AB hydrolase superfamily. Lipase family. Class 3 subfamily.

The protein localises to the secreted. The enzyme catalyses a monoacylglycerol + H2O = glycerol + a fatty acid + H(+). It catalyses the reaction a diacylglycerol + H2O = a monoacylglycerol + a fatty acid + H(+). Its function is as follows. Secreted lipase involved in Dandruff and seborrheic dermatitis (D/SD) probably via lipase-mediated breakdown of sebaceous lipids and release of irritating free fatty acids. Shows activity against monoglyceride and diglyceride substrates and generates free oleic acid from the substrates mono- and diolein. Able to cleave the oleic acid from both the 1 and the 2 position of the glycerol backbone as 1,2 isomers of diolein were converted into oleic acid and glycerol. Due to an absence of fatty acid synthase genes in Malassezia species, secretory lipases are essential for the yeast to generate free fatty acids from degradation of sebum and assimilate them as lipid sources for growth. Plays an essential role at the pathogen-host interface during disease progression. Also performs the reverse reaction to build diacylglycerols from monoacylglycerols. This is Secreted mono- and diacylglycerol lipase LIP2 from Malassezia restricta (Seborrheic dermatitis infection agent).